Here is a 429-residue protein sequence, read N- to C-terminus: MRDELNQGLIDYLKASPTPFHATASLAQTLQAAGYKALDEREPWHTEAGGRYYVTRNDSAIIAFQLGGKPLAEHGLRLVGAHTDSPCLRVKPQPELQRQGFWQLGVEVYGGALLAPWFDRDLSLAGRVTYSRDGRIESQLIDFRQPIACIPNLAIHLNREANQGWAINAQNELPPILAQIASQESPDFRALLADQLGREHGLVADVVLDFELSFYDTQPAAVIGLNGDFIAGARLDNLLSCFAGLQALFDAGPDETCVLVCTDHEEVGSASMCGADGPFLEQVLRRLLPEEDDFQRAINRSLLISADNAHAVHPNYADKHDGNHGPKLNAGPVIKVNSNQRYATSSETAGFFRHLCLENEVPVQSFVTRSDMGCGSTIGPITASQLGVRTVDIGLPTFAMHSIRELAGSQDLAHLVKVLGAFYSSAELP.

Zn(2+) contacts are provided by His-82, His-156, and His-401.

The protein belongs to the peptidase M18 family. Requires Zn(2+) as cofactor.

The sequence is that of Probable M18 family aminopeptidase 2 from Stutzerimonas stutzeri (strain A1501) (Pseudomonas stutzeri).